We begin with the raw amino-acid sequence, 152 residues long: Large ribosomal subunit protein uL11 (152 aa).

This sequence belongs to the universal ribosomal protein uL11 family. Part of the ribosomal stalk of the 50S ribosomal subunit. Interacts with L10 and the large rRNA to form the base of the stalk. L10 forms an elongated spine to which L12 dimers bind in a sequential fashion forming a multimeric L10(L12)X complex. In terms of processing, one or more lysine residues are methylated.

In terms of biological role, forms part of the ribosomal stalk which helps the ribosome interact with GTP-bound translation factors. This chain is Large ribosomal subunit protein uL11, found in Mycoplasmoides gallisepticum (strain R(low / passage 15 / clone 2)) (Mycoplasma gallisepticum).